Here is a 177-residue protein sequence, read N- to C-terminus: Cytidylate kinase (177 aa).

8–16 is a binding site for ATP; it reads GPPGGGKTT.

This sequence belongs to the cytidylate kinase family. Type 2 subfamily.

The protein resides in the cytoplasm. It catalyses the reaction CMP + ATP = CDP + ADP. The enzyme catalyses dCMP + ATP = dCDP + ADP. The chain is Cytidylate kinase from Staphylothermus marinus (strain ATCC 43588 / DSM 3639 / JCM 9404 / F1).